Reading from the N-terminus, the 544-residue chain is Chaperonin GroEL (544 aa).

ATP-binding positions include 30–33 (TLGP), lysine 51, 87–91 (DGTTT), glycine 415, 481–483 (DAL), and aspartate 497.

This sequence belongs to the chaperonin (HSP60) family. As to quaternary structure, forms a cylinder of 14 subunits composed of two heptameric rings stacked back-to-back. Interacts with the co-chaperonin GroES.

The protein resides in the cytoplasm. The enzyme catalyses ATP + H2O + a folded polypeptide = ADP + phosphate + an unfolded polypeptide.. Functionally, together with its co-chaperonin GroES, plays an essential role in assisting protein folding. The GroEL-GroES system forms a nano-cage that allows encapsulation of the non-native substrate proteins and provides a physical environment optimized to promote and accelerate protein folding. In Chlamydia trachomatis serovar L2 (strain ATCC VR-902B / DSM 19102 / 434/Bu), this protein is Chaperonin GroEL.